Consider the following 727-residue polypeptide: Cyclin-T1 (727 aa).

At Ser-117 the chain carries Phosphoserine. The short motif at 253–270 (KRIWNWRAWQADRKTKAD) is the Nuclear localization signal element. Lys-343 is covalently cross-linked (Glycyl lysine isopeptide (Lys-Gly) (interchain with G-Cter in SUMO2)). At Ser-389 the chain carries Phosphoserine. A coiled-coil region spans residues 389-420 (SLKEYRAKHAEELAAQKRQLENMEANVKSQYA). The residue at position 391 (Lys-391) is an N6-acetyllysine. Lys-416 participates in a covalent cross-link: Glycyl lysine isopeptide (Lys-Gly) (interchain with G-Cter in SUMO2). 2 positions are modified to ADP-ribosylserine: Ser-417 and Ser-475. A histidine-rich domain (HRD) region spans residues 481–551 (IKMRIKVHTA…RLGDPKHSSQ (71 aa)). Residue Lys-482 forms a Glycyl lysine isopeptide (Lys-Gly) (interchain with G-Cter in SUMO2) linkage. At Lys-486 the chain carries N6-(ADP-ribosyl)lysine. Residues 487–507 (VHTAADKHNSVDDSVTKNREH) show a composition bias toward basic and acidic residues. Disordered regions lie at residues 487-631 (VHTA…QPSC) and 691-727 (YMNPRAGGMSSRSGNTDKPRPPPLPSEPPPPLPPLPK). Residue His-488 is modified to ADP-ribosylhistidine. 2 positions are modified to phosphoserine: Ser-496 and Ser-500. Basic residues predominate over residues 508-531 (KEKHKTHPSNHHHHHNHHSHKHSH). An ADP-ribosylhistidine modification is found at His-531. ADP-ribosylserine occurs at positions 532, 550, and 553. His-557 is modified (ADP-ribosylhistidine). Positions 561–571 (SLSSSFSSSSS) are enriched in low complexity. Position 564 is an ADP-ribosylserine (Ser-564). Position 565 is a phosphoserine (Ser-565). Over residues 616 to 631 (GHSSDTSGLHFSQPSC) the composition is skewed to polar residues. The span at 711-727 (PPPLPSEPPPPLPPLPK) shows a compositional bias: pro residues.

The protein belongs to the cyclin family. Cyclin C subfamily. In terms of assembly, cyclin-T1 is the predominant cyclin that associates with CDK9 to form a heterodimer called P-TEFb. P-TEFb forms a complex with AFF4/AF5Q31. Component of a complex which is at least composed of HTATSF1/Tat-SF1, P-TEFb complex, RNA pol II, SUPT5H, and NCL/nucleolin. Component of the 7SK snRNP complex at least composed of P-TEFb (composed of CDK9 and CCNT1/cyclin-T1), HEXIM1, HEXIM2, BCDIN3, SART3 proteins and 7SK and U6 snRNAs. Interacts (via central region) with ZMYND8 (via N-terminus); the interaction is direct and the association appears to occur between homodimeric ZMYND8 and the activated form of the P-TEFb complex. Interacts with BRD4, targets chromatin binding. Interacts with JMJD6. Interacts with MDFIC. Interacts with HSF1. Interacts with HTATSF1. Interacts with TBX21. As to quaternary structure, (Microbial infection) Binds to BIV Tat, however Tat binds TAR RNA in a Cyc-T1-independent mode. Post-translationally, ADP-ribosylation on serine residues by PARP1 in response to DNA damage disrupts the phase separation activity of CCNT1, thereby preventing activation of CDK9.

Its subcellular location is the nucleus. Its function is as follows. Regulatory subunit of the cyclin-dependent kinase pair (CDK9/cyclin-T1) complex, also called positive transcription elongation factor B (P-TEFb), which facilitates the transition from abortive to productive elongation by phosphorylating the CTD (C-terminal domain) of the large subunit of RNA polymerase II (RNA Pol II). Required to activate the protein kinase activity of CDK9: acts by mediating formation of liquid-liquid phase separation (LLPS) that enhances binding of P-TEFb to the CTD of RNA Pol II. In Bos taurus (Bovine), this protein is Cyclin-T1 (CCNT1).